The following is a 145-amino-acid chain: Large ribosomal subunit protein uL13 (145 aa).

Belongs to the universal ribosomal protein uL13 family. In terms of assembly, part of the 50S ribosomal subunit.

Its function is as follows. This protein is one of the early assembly proteins of the 50S ribosomal subunit, although it is not seen to bind rRNA by itself. It is important during the early stages of 50S assembly. The protein is Large ribosomal subunit protein uL13 of Staphylococcus carnosus (strain TM300).